The chain runs to 150 residues: UPF0178 protein Sbal223_2514 (150 aa).

The protein belongs to the UPF0178 family.

The chain is UPF0178 protein Sbal223_2514 from Shewanella baltica (strain OS223).